A 556-amino-acid polypeptide reads, in one-letter code: Hydroxylamine reductase (556 aa).

The [4Fe-4S] cluster site is built by Cys-4, Cys-7, Cys-19, and Cys-26. Residues His-252, Glu-276, Cys-320, Cys-407, Cys-435, Cys-460, Glu-494, and Lys-496 each contribute to the hybrid [4Fe-2O-2S] cluster site. Cys-407 bears the Cysteine persulfide mark.

The protein belongs to the HCP family. [4Fe-4S] cluster serves as cofactor. Requires hybrid [4Fe-2O-2S] cluster as cofactor.

The protein resides in the cytoplasm. It catalyses the reaction A + NH4(+) + H2O = hydroxylamine + AH2 + H(+). Catalyzes the reduction of hydroxylamine to form NH(3) and H(2)O. The protein is Hydroxylamine reductase of Acidithiobacillus ferridurans.